The chain runs to 147 residues: Hemoglobin subunit delta (147 aa).

V2 carries the N-acetylalanine; in variant Niigata modification. In terms of domain architecture, Globin spans 3-147 (HLTPEEKTAV…VANALAHKYH (145 aa)). S51 bears the Phosphoserine mark. 2 residues coordinate heme b: H64 and H93.

The protein belongs to the globin family. In terms of assembly, heterotetramer of two alpha chains and two delta chains in adult hemoglobin A2 (HbA2). HbA2 represents less than 3.5% of adult hemoglobin. Red blood cells.

In terms of biological role, involved in oxygen transport from the lung to the various peripheral tissues. In Homo sapiens (Human), this protein is Hemoglobin subunit delta (HBD).